The chain runs to 378 residues: Succinyl-diaminopimelate desuccinylase (378 aa).

A Zn(2+)-binding site is contributed by histidine 68. Aspartate 70 is an active-site residue. Aspartate 102 lines the Zn(2+) pocket. Glutamate 136 acts as the Proton acceptor in catalysis. Zn(2+) is bound by residues glutamate 137, glutamate 165, and histidine 351.

Belongs to the peptidase M20A family. DapE subfamily. As to quaternary structure, homodimer. Requires Zn(2+) as cofactor. The cofactor is Co(2+).

It catalyses the reaction N-succinyl-(2S,6S)-2,6-diaminopimelate + H2O = (2S,6S)-2,6-diaminopimelate + succinate. It functions in the pathway amino-acid biosynthesis; L-lysine biosynthesis via DAP pathway; LL-2,6-diaminopimelate from (S)-tetrahydrodipicolinate (succinylase route): step 3/3. Catalyzes the hydrolysis of N-succinyl-L,L-diaminopimelic acid (SDAP), forming succinate and LL-2,6-diaminopimelate (DAP), an intermediate involved in the bacterial biosynthesis of lysine and meso-diaminopimelic acid, an essential component of bacterial cell walls. The chain is Succinyl-diaminopimelate desuccinylase from Pseudomonas syringae pv. syringae.